The following is a 207-amino-acid chain: Recombination protein RecR (207 aa).

A C4-type zinc finger spans residues 60 to 75 (CRRCHNISDSGVCTIC). A Toprim domain is found at 83-178 (STLCVVENIR…RVSVIARGIA (96 aa)).

This sequence belongs to the RecR family.

Its function is as follows. May play a role in DNA repair. It seems to be involved in an RecBC-independent recombinational process of DNA repair. It may act with RecF and RecO. This is Recombination protein RecR from Porphyromonas gingivalis (strain ATCC 33277 / DSM 20709 / CIP 103683 / JCM 12257 / NCTC 11834 / 2561).